The sequence spans 110 residues: Large ribosomal subunit protein P2 (110 aa).

The residue at position 59 (serine 59) is an O-(pantetheine 4'-phosphoryl)serine; in acyl carrier protein form. Residues 62 to 110 (LASVPSGGAAPAAAAGGAAAGGAAEEKAEDKPAEKDEESDDDMGFGLFD) are disordered. The span at 63–84 (ASVPSGGAAPAAAAGGAAAGGA) shows a compositional bias: low complexity. Residues 85–95 (AEEKAEDKPAE) are compositionally biased toward basic and acidic residues. The residue at position 100 (serine 100) is a Phosphoserine; in ribosomal stalk form.

This sequence belongs to the eukaryotic ribosomal protein P1/P2 family. In terms of assembly, the phosphorylated form is part of the ribosomal stalk involved in the interaction of the elongation factors with the ribosome during protein synthesis. The phosphopantetheinylated form is part of the 10S triacylglycerol biosynthetic complex involved in de novo fatty acid biosynthesis. 4'-phosphopantetheine is transferred from CoA to a specific serine by acpS. This modification is essential for activity because fatty acids are bound in thioester linkage to the sulfhydryl of the prosthetic group.

It is found in the cytoplasm. Functionally, probable bifunctional protein. The phosphorylated protein plays an important role in the elongation step of protein synthesis. The phosphopantetheinylated protein acts as an acyl carrier protein. The protein is Large ribosomal subunit protein P2 of Rhodotorula glutinis (Yeast).